The chain runs to 157 residues: MSAPFEERSGVVPCGTPWGQWYQTLEEVFIEVQVPPGTRAQDIQCGLQSRHVALSVGGREILKGKLFDSTIADEGTWTLEDRKMVRIVLTKTKRDAANCWTSLLESEYAADPWVQDQMQRKLTLERFQKENPGFDFSGAEISGNYTKGGPDFSNLEK.

N-acetylserine is present on serine 2. In terms of domain architecture, CS spans 14–104 (CGTPWGQWYQ…DAANCWTSLL (91 aa)). The tract at residues 134–157 (FDFSGAEISGNYTKGGPDFSNLEK) is disordered. At serine 142 the chain carries Phosphoserine. Tyrosine 145 is subject to Phosphotyrosine.

As to quaternary structure, interacts with LIS1.

It localises to the chromosome. The protein localises to the centromere. It is found in the kinetochore. The protein resides in the cytoplasm. Its subcellular location is the cytoskeleton. It localises to the microtubule organizing center. The protein localises to the centrosome. It is found in the spindle pole. Its function is as follows. May regulate the LIS1/dynein pathway by stabilizing LIS1 with Hsp90 chaperone. This is NudC domain-containing protein 2 (NUDCD2) from Homo sapiens (Human).